Reading from the N-terminus, the 341-residue chain is KRR1 small subunit processome component homolog (341 aa).

In terms of domain architecture, KH spans 126–194; sequence DIIKIGNLVH…VRDIVLETMN (69 aa). Basic residues predominate over residues 230–244; it reads KNKNISKRKQPKSRK. Residues 230-327 form a disordered region; the sequence is KNKNISKRKQ…RPSEASKVDV (98 aa). A coiled-coil region spans residues 271–341; the sequence is FLNKEQKQAK…AKLLKANKQK (71 aa). Composition is skewed to basic and acidic residues over residues 272 to 303 and 313 to 327; these read LNKE…RNKD and EQNR…KVDV.

Belongs to the KRR1 family. Monomer. Component of the ribosomal small subunit (SSU) processome.

The protein resides in the nucleus. Its subcellular location is the nucleolus. Required for 40S ribosome biogenesis. Involved in nucleolar processing of pre-18S ribosomal RNA and ribosome assembly. Binds to RNA. Required for female germline development, cell viability during eye development and for survival of dividing cells and epithelial cells during early wing disk development. This chain is KRR1 small subunit processome component homolog, found in Drosophila grimshawi (Hawaiian fruit fly).